The following is a 153-amino-acid chain: Large ribosomal subunit protein uL15 (153 aa).

Positions 1–48 are disordered; that stretch reads MRLNELSPAPGSKKDRKRVGRGDAGRGNYSGRGMKGQKARSGGATRPG.

This sequence belongs to the universal ribosomal protein uL15 family. In terms of assembly, part of the 50S ribosomal subunit.

Binds to the 23S rRNA. The chain is Large ribosomal subunit protein uL15 from Dehalococcoides mccartyi (strain ATCC BAA-2266 / KCTC 15142 / 195) (Dehalococcoides ethenogenes (strain 195)).